The following is a 186-amino-acid chain: Peptidyl-tRNA hydrolase (186 aa).

Position 14 (Y14) interacts with tRNA. H19 serves as the catalytic Proton acceptor. The tRNA site is built by F64, N66, and N112.

Belongs to the PTH family. In terms of assembly, monomer.

Its subcellular location is the cytoplasm. It catalyses the reaction an N-acyl-L-alpha-aminoacyl-tRNA + H2O = an N-acyl-L-amino acid + a tRNA + H(+). Its function is as follows. Hydrolyzes ribosome-free peptidyl-tRNAs (with 1 or more amino acids incorporated), which drop off the ribosome during protein synthesis, or as a result of ribosome stalling. In terms of biological role, catalyzes the release of premature peptidyl moieties from peptidyl-tRNA molecules trapped in stalled 50S ribosomal subunits, and thus maintains levels of free tRNAs and 50S ribosomes. The chain is Peptidyl-tRNA hydrolase from Mycoplasma mycoides subsp. mycoides SC (strain CCUG 32753 / NCTC 10114 / PG1).